We begin with the raw amino-acid sequence, 227 residues long: 4-nitrobenzoate reductase (227 aa).

Residue 15–19 (RRAVR) participates in FMN binding. Positions 45, 102, and 107 each coordinate NAD(+). Residue Arg-213 coordinates FMN.

Belongs to the nitroreductase family. The cofactor is FMN.

It carries out the reaction 4-nitrobenzoate + 2 NADH + 2 H(+) = 4-hydroxylaminobenzoate + 2 NAD(+) + H2O. Its function is as follows. Nitroreductase involved in the degradation of nitroaromatic compounds. Catalyzes the conversion of 4-nitrobenzoate to 4-hydroxylaminobenzoate. Required for the catabolism of 4-nitrotoluene. This chain is 4-nitrobenzoate reductase, found in Pseudomonas putida (Arthrobacter siderocapsulatus).